A 1004-amino-acid chain; its full sequence is MQSCGRWWGRLAARGAPRHLRPAAGGPRRQQQRWGGGEAARCIEQLLPRHDDFCRRHIGPREREKREMLSAVGVQSVEELMDKTIPASIRLRRPLRMDDHVVENEILETLYNIASKNKIWRSYIGMGYYNCSVPQPIARNLLENAGWVTQYTPYQPEVSQGRLESLLNYQTMVCDITGMDVANASLLDEGTAAAEAMQLCHRQNKRRKFYIDARCHPQTIANYTGVITELKLPHEMDFSGKDVSGVLFQYPDTEGKVEDFSELIERAHQNGTLACCATDLLALCILKPPGEFGVDVVLGSSQRFGVPLCYGGPHAAFFAVKENLVRMMPGRMVGVTRDANGKEVYRLALQTREQHIRRDKATSNICTAQALLANMAAMYGVYHGSDGLKDIARRVHNATLILAEGLRRAGHKLHHDLFFDTLTVTCGCSVKEVLDRAALRKINVRIYSDGRLGVSLDETVNEKDLDDILWIFGCESSAELVAEGMGEETKGILSTPFKRTSKFLTHQVFNSYHSETNIVRYMKRLENKDISLVHSMIPLGSCTMKLNSSAELAPISWKEFANIHPFVPLDQAQGYQQLFKDLEKDLCEITGYDKISFQPNSGAQGEYAGLAAIKAYLNAKGERHRSVCLIPRSAHGTNPASAQMAGMKIQPIEVDKNGSIDISHLKAMVDKHKENLAAIMITYPSTNGVFEEEIGDVCDLIHKHGGQVYLDGANMNAQVGLCRPGDYGSDVSHLNLHKTFCIPHGGGGPGMGPIGVKKHLAPYLPTHPVIKIQTDKDACPLGTVSAAPWGSSAILPISWVYIKTMGAKGLKHASEIAILNANYMAKRLEKHYKILFRGVRGYVAHEFILDTRPFKKTANIEAVDLAKRLQDYGFHAPTMSWPVAGTLMIEPTESEDKGELDRFCDAMISIRQEIADIEEGRMDPQVNPLKMSPHTLNCVTSSKWDRPYSREVAAFPLPFVKPESKFWPTIARIDDIYGDQHLVCTCPPMEAYESPFSEQKRASS.

The residue at position 738 (lysine 738) is an N6-(pyridoxal phosphate)lysine.

This sequence belongs to the GcvP family. As to quaternary structure, homodimer. Interacts with GCSH. The glycine cleavage system is composed of four proteins: P (GLDC), T (GCST), L (DLD) and H (GCSH). Requires pyridoxal 5'-phosphate as cofactor. Liver (at protein level).

It localises to the mitochondrion. It carries out the reaction N(6)-[(R)-lipoyl]-L-lysyl-[glycine-cleavage complex H protein] + glycine + H(+) = N(6)-[(R)-S(8)-aminomethyldihydrolipoyl]-L-lysyl-[glycine-cleavage complex H protein] + CO2. With respect to regulation, stimulated by lipoic acid. Inhibited in presence of methylamine. The glycine cleavage system catalyzes the degradation of glycine. The P protein (GLDC) binds the alpha-amino group of glycine through its pyridoxal phosphate cofactor; CO(2) is released and the remaining methylamine moiety is then transferred to the lipoamide cofactor of the H protein (GCSH). In Gallus gallus (Chicken), this protein is Glycine dehydrogenase (decarboxylating), mitochondrial.